A 106-amino-acid polypeptide reads, in one-letter code: Small ribosomal subunit protein uS10 (106 aa).

The protein belongs to the universal ribosomal protein uS10 family. As to quaternary structure, part of the 30S ribosomal subunit.

Involved in the binding of tRNA to the ribosomes. The sequence is that of Small ribosomal subunit protein uS10 from Parasynechococcus marenigrum (strain WH8102).